The following is a 298-amino-acid chain: Olfactory receptor 52Z1P (298 aa).

The Extracellular portion of the chain corresponds to 1-14 (MGIPGLEGLHTWIS). The helical transmembrane segment at 15–35 (IPFSFMYIVAVAGNIFLIFLI) threads the bilayer. Residues 36–43 (MTERSLHE) are Cytoplasmic-facing. A helical membrane pass occupies residues 44–64 (PMYLFLSMLASADFLLATAAA). The Extracellular portion of the chain corresponds to 65-85 (PKVLAILWFHSMDISFGSCVS). The cysteines at positions 83 and 164 are disulfide-linked. The helical transmembrane segment at 86–106 (QMFFIHFIFVAESAILLAMAF) threads the bilayer. At 107–128 (DRYVAICYPLRYTILTSSAVRK) the chain is on the cytoplasmic side. A helical transmembrane segment spans residues 129 to 149 (IGIAAVVRSFFICCPFIFLVY). The Extracellular segment spans residues 150 to 178 (RLTYCGRNIIPHSYCEHIARLACGNINVN). A helical membrane pass occupies residues 179–199 (IIYGLTVALLSTGLDIVLIII). Over 200-223 (SYTMILHSVFQISSWAARFKALST) the chain is Cytoplasmic. A helical membrane pass occupies residues 224–244 (CGSHICVIFMFYTPAFFSFLA). Residues 245–257 (HRFGGKTIPHHIH) lie on the Extracellular side of the membrane. The helical transmembrane segment at 258–278 (ILVGSLYVLVPPMLNPIIYGV) threads the bilayer. The Cytoplasmic segment spans residues 279–298 (KTKQIKDRVILLFSPISVCC).

The protein belongs to the G-protein coupled receptor 1 family.

Its subcellular location is the cell membrane. Odorant receptor. The polypeptide is Olfactory receptor 52Z1P (Homo sapiens (Human)).